Consider the following 289-residue polypeptide: Acetyl-coenzyme A carboxylase carboxyl transferase subunit beta (289 aa).

The 266-residue stretch at 24–289 (LWTNCESCGQ…RQKTVSDAAA (266 aa)) folds into the CoA carboxyltransferase N-terminal domain. Positions 28, 31, 47, and 50 each coordinate Zn(2+). The C4-type zinc-finger motif lies at 28-50 (CESCGQMMLTKELERSEKVCPHC).

This sequence belongs to the AccD/PCCB family. In terms of assembly, acetyl-CoA carboxylase is a heterohexamer composed of biotin carboxyl carrier protein (AccB), biotin carboxylase (AccC) and two subunits each of ACCase subunit alpha (AccA) and ACCase subunit beta (AccD). It depends on Zn(2+) as a cofactor.

Its subcellular location is the cytoplasm. The enzyme catalyses N(6)-carboxybiotinyl-L-lysyl-[protein] + acetyl-CoA = N(6)-biotinyl-L-lysyl-[protein] + malonyl-CoA. It functions in the pathway lipid metabolism; malonyl-CoA biosynthesis; malonyl-CoA from acetyl-CoA: step 1/1. Component of the acetyl coenzyme A carboxylase (ACC) complex. Biotin carboxylase (BC) catalyzes the carboxylation of biotin on its carrier protein (BCCP) and then the CO(2) group is transferred by the transcarboxylase to acetyl-CoA to form malonyl-CoA. The polypeptide is Acetyl-coenzyme A carboxylase carboxyl transferase subunit beta (Gluconobacter oxydans (strain 621H) (Gluconobacter suboxydans)).